We begin with the raw amino-acid sequence, 293 residues long: Ribosomal protein L11 methyltransferase (293 aa).

The S-adenosyl-L-methionine site is built by threonine 145, glycine 166, aspartate 188, and asparagine 230.

The protein belongs to the methyltransferase superfamily. PrmA family.

It localises to the cytoplasm. It carries out the reaction L-lysyl-[protein] + 3 S-adenosyl-L-methionine = N(6),N(6),N(6)-trimethyl-L-lysyl-[protein] + 3 S-adenosyl-L-homocysteine + 3 H(+). Methylates ribosomal protein L11. This Shewanella sp. (strain ANA-3) protein is Ribosomal protein L11 methyltransferase.